Reading from the N-terminus, the 118-residue chain is Large ribosomal subunit protein uL24 (118 aa).

Belongs to the universal ribosomal protein uL24 family. Part of the 50S ribosomal subunit.

In terms of biological role, one of two assembly initiator proteins, it binds directly to the 5'-end of the 23S rRNA, where it nucleates assembly of the 50S subunit. Its function is as follows. One of the proteins that surrounds the polypeptide exit tunnel on the outside of the subunit. In Prochlorococcus marinus (strain MIT 9313), this protein is Large ribosomal subunit protein uL24.